We begin with the raw amino-acid sequence, 515 residues long: MLVDTGLGLISELQAKLGWAVLLQIVPITIVAYNLLWFIYASFFSSLRKIPGPFLARISRVWEMKKTATGNIHEIMMDLHRRHGAIVRIGPRRYDFDTMEALKIIYRIGNALPKADYYKPFGLPSFPNLFDEQNPARHSAIKKQVASLYTMTALLSYEEGVDGQTAILKEQLQRFCDQKQVIDLPRFLQYYAFDVIGVITVGKSMGMMESNSDTNGACSALDGMWHYASMMAYIPNMHAWWLRLSSLLPIEVPIKGLTEYVERRIIQYRLKAAEFGDDAALKGENNFLAKLLLMEKKGTVTPVETQQAVGLNIGAGSDTTANALSTILYYLYTNPRTLHTLREELERYVKDGPISFQQSQSMPYLQAVIKEALRLHPGVGTQLTRVVPKGGLVIEGQFFPEGTEVGVNGWALYHNKAIFGNDASIFRPERWLEANENINIGGSFAFGAGSRSCIGKNISILEMSKAIPQIVRNFDIEINHGDMTWKNECWWFVKPEYKAMIKPRRCCLSRDESLV.

Cys-453 lines the heme pocket.

This sequence belongs to the cytochrome P450 family. Heme serves as cofactor.

Functionally, can detoxify the phytoalexin pisatin from garden pea. Pisatin is an antimicrobial compound produced by pea in response to infection by plant pathogens. This chain is Pisatin demethylase (PDAT9), found in Fusarium vanettenii (Neocosmospora pisi).